The chain runs to 143 residues: Sec-independent protein translocase protein TatB (143 aa).

The chain crosses the membrane as a helical span at residues 2–22; it reads FGNIGWGEFMVLLVAALVILG. Positions 97–143 are disordered; it reads FDKPGSVSFDKSNPGTKAVSADPSTPTAPQNKPLAAGERPPIDLDAT.

The protein belongs to the TatB family. As to quaternary structure, the Tat system comprises two distinct complexes: a TatABC complex, containing multiple copies of TatA, TatB and TatC subunits, and a separate TatA complex, containing only TatA subunits. Substrates initially bind to the TatABC complex, which probably triggers association of the separate TatA complex to form the active translocon.

It localises to the cell membrane. Part of the twin-arginine translocation (Tat) system that transports large folded proteins containing a characteristic twin-arginine motif in their signal peptide across membranes. Together with TatC, TatB is part of a receptor directly interacting with Tat signal peptides. TatB may form an oligomeric binding site that transiently accommodates folded Tat precursor proteins before their translocation. The protein is Sec-independent protein translocase protein TatB of Rhodococcus opacus (strain B4).